We begin with the raw amino-acid sequence, 433 residues long: UDP-N-acetylmuramate--L-alanine ligase (433 aa).

108-114 (GAHGKTS) contacts ATP.

The protein belongs to the MurCDEF family.

Its subcellular location is the cytoplasm. The catalysed reaction is UDP-N-acetyl-alpha-D-muramate + L-alanine + ATP = UDP-N-acetyl-alpha-D-muramoyl-L-alanine + ADP + phosphate + H(+). The protein operates within cell wall biogenesis; peptidoglycan biosynthesis. Functionally, cell wall formation. In Anoxybacillus flavithermus (strain DSM 21510 / WK1), this protein is UDP-N-acetylmuramate--L-alanine ligase.